Consider the following 298-residue polypeptide: Putative glycylpeptide N-tetradecanoyltransferase (298 aa).

It belongs to the NMT family.

The catalysed reaction is N-terminal glycyl-[protein] + tetradecanoyl-CoA = N-tetradecanoylglycyl-[protein] + CoA + H(+). Its function is as follows. Adds a myristoyl group to the N-terminal glycine residue of certain proteins. In Melanoplus sanguinipes (Migratory grasshopper), this protein is Putative glycylpeptide N-tetradecanoyltransferase.